Consider the following 379-residue polypeptide: Tryptophan 2,3-dioxygenase (379 aa).

Substrate contacts are provided by residues 57 to 61 (FIITH) and Arg-128. His-312 is a binding site for heme. Thr-327 lines the substrate pocket.

This sequence belongs to the tryptophan 2,3-dioxygenase family. Homotetramer. Dimer of dimers. Heme is required as a cofactor.

It carries out the reaction L-tryptophan + O2 = N-formyl-L-kynurenine. It functions in the pathway amino-acid degradation; L-tryptophan degradation via kynurenine pathway; L-kynurenine from L-tryptophan: step 1/2. Its pathway is pigment biosynthesis; ommochrome biosynthesis. In terms of biological role, heme-dependent dioxygenase that catalyzes the oxidative cleavage of the L-tryptophan (L-Trp) pyrrole ring and converts L-tryptophan to N-formyl-L-kynurenine. Catalyzes the oxidative cleavage of the indole moiety. This chain is Tryptophan 2,3-dioxygenase, found in Drosophila sechellia (Fruit fly).